Here is a 463-residue protein sequence, read N- to C-terminus: Immune-associated nucleotide-binding protein 10 (463 aa).

The region spanning 3–211 (EPIKNIVLVG…YTYQLHRKIK (209 aa)) is the AIG1-type G domain. The interval 12–19 (GRTGNGKS) is G1. GTP contacts are provided by residues 12 to 20 (GRTGNGKSS) and Ser-33. The tract at residues 39–43 (GVTMI) is G2. The interval 61 to 64 (DTPG) is G3. The segment at 131–134 (TGGD) is G4. Positions 170 to 172 (DNK) are G5. A GTP-binding site is contributed by Asn-171. A coiled-coil region spans residues 173–308 (SKDEKKKVEQ…KQLIAQANRM (136 aa)).

It belongs to the TRAFAC class TrmE-Era-EngA-EngB-Septin-like GTPase superfamily. AIG1/Toc34/Toc159-like paraseptin GTPase family. IAN subfamily. Expressed in radicles of the germinating seeds.

The protein is Immune-associated nucleotide-binding protein 10 of Arabidopsis thaliana (Mouse-ear cress).